A 488-amino-acid polypeptide reads, in one-letter code: Glutamyl-tRNA(Gln) amidotransferase subunit A (488 aa).

Catalysis depends on charge relay system residues Lys77 and Ser152. The active-site Acyl-ester intermediate is Ser176.

The protein belongs to the amidase family. GatA subfamily. Heterotrimer of A, B and C subunits.

It carries out the reaction L-glutamyl-tRNA(Gln) + L-glutamine + ATP + H2O = L-glutaminyl-tRNA(Gln) + L-glutamate + ADP + phosphate + H(+). Functionally, allows the formation of correctly charged Gln-tRNA(Gln) through the transamidation of misacylated Glu-tRNA(Gln) in organisms which lack glutaminyl-tRNA synthetase. The reaction takes place in the presence of glutamine and ATP through an activated gamma-phospho-Glu-tRNA(Gln). The polypeptide is Glutamyl-tRNA(Gln) amidotransferase subunit A (Streptococcus pyogenes serotype M12 (strain MGAS2096)).